The chain runs to 595 residues: Isoprene synthase, chloroplastic (595 aa).

Residues 1–37 constitute a chloroplast transit peptide; that stretch reads MATELLCLHRPISLTHKLFRNPLPKVIQATPLTLKLR. Aspartate 345 serves as a coordination point for dimethylallyl diphosphate. The Mg(2+) site is built by aspartate 345 and aspartate 349. The short motif at 345–349 is the DDXXD motif element; sequence DDIYD. Positions 423, 486, and 489 each coordinate dimethylallyl diphosphate. Mg(2+) contacts are provided by asparagine 489, serine 493, and glutamate 497.

This sequence belongs to the terpene synthase family. Tpsb subfamily. Homodimer. The cofactor is Mg(2+). Mn(2+) is required as a cofactor.

It is found in the plastid. It localises to the chloroplast. The catalysed reaction is dimethylallyl diphosphate = isoprene + diphosphate. Its pathway is secondary metabolite biosynthesis; terpenoid biosynthesis. Its activity is regulated as follows. Competitive inhibition is mediated by geranyl diphosphate (GPP). Functionally, lyase that catalyzes the formation of isoprene from dimethylallyl diphosphate via a syn-periplanar elimination mechanism in which the diphosphate-leaving group serves as a general base. The polypeptide is Isoprene synthase, chloroplastic (Populus canescens (Grey poplar)).